A 285-amino-acid chain; its full sequence is K88 fimbrial protein AD (285 aa).

The N-terminal stretch at 1–21 (MKKTLIALAIAASAASGMAHA) is a signal peptide.

The protein belongs to the fimbrial K88 protein family. In terms of assembly, K88 fimbria, 0.1-1 micrometer in length and 7 nanometers in diameter, is composed of about 100 identical subunits.

It is found in the fimbrium. Functionally, K88 major fimbrial subunit. Fimbriae (also called pili), are polar filaments radiating from the surface of the bacterium to a length of 0.5-1.5 micrometers and numbering 100-300 per cell. They enable bacteria to colonize the epithelium of specific host organs. This chain is K88 fimbrial protein AD (faeG), found in Escherichia coli.